The primary structure comprises 577 residues: Arginine--tRNA ligase (577 aa).

The 'HIGH' region signature appears at 122 to 132 (PNVAKEMHVGH).

It belongs to the class-I aminoacyl-tRNA synthetase family. Monomer.

The protein localises to the cytoplasm. The enzyme catalyses tRNA(Arg) + L-arginine + ATP = L-arginyl-tRNA(Arg) + AMP + diphosphate. The polypeptide is Arginine--tRNA ligase (Histophilus somni (strain 129Pt) (Haemophilus somnus)).